A 287-amino-acid polypeptide reads, in one-letter code: MATLLQEENTTSLEAIPSNTTAKTRPTVLVFDSGVGGLSVYQEVRQLLPDLHYIYAFDNVAFPYGEKSEEFIVERVLEIVSAVQQRHPLAIVIIACNTASTVSLPALRERFTFPVVGVVPAIKPAARLTANGVVGLLATRGTVQRTYTHELIARFATDCKIELLGSSELVELAEAKLHGEAVPLPTLKKILHPWLSMREPPDTVVLGCTHFPLLAEELMQVLPEGTRLIDSGAAIARRTAWLISTQENLVSTQEDNLAYCMALNEDTDALLPVLQGYGFKSLKKLPV.

Substrate-binding positions include 32–33 (DS) and 64–65 (YG). Catalysis depends on Cys96, which acts as the Proton donor/acceptor. Substrate is bound at residue 97–98 (NT). The active-site Proton donor/acceptor is Cys208. Residue 209–210 (TH) participates in substrate binding.

The protein belongs to the aspartate/glutamate racemases family.

The enzyme catalyses L-glutamate = D-glutamate. It functions in the pathway cell wall biogenesis; peptidoglycan biosynthesis. Provides the (R)-glutamate required for cell wall biosynthesis. This is Glutamate racemase from Serratia proteamaculans (strain 568).